Consider the following 274-residue polypeptide: Thiamine kinase (274 aa).

This sequence belongs to the thiamine kinase family.

It carries out the reaction thiamine + ATP = thiamine phosphate + ADP + H(+). It functions in the pathway cofactor biosynthesis; thiamine diphosphate biosynthesis; thiamine phosphate from thiamine: step 1/1. Functionally, catalyzes the ATP-dependent phosphorylation of thiamine to thiamine phosphate. Is involved in thiamine salvage. The chain is Thiamine kinase from Escherichia coli O157:H7 (strain EC4115 / EHEC).